A 713-amino-acid chain; its full sequence is Macrophage-expressed gene 1 protein (713 aa).

A signal peptide spans 1-19 (MNSFMALVLIWMIIACAEA). The MACPF domain occupies 30 to 345 (GFQICKNALK…TAVRHYYTFN (316 aa)). Cysteines 34 and 70 form a disulfide. The next 2 membrane-spanning stretches (beta stranded) occupy residues 113-120 (LSINTELA) and 127-132 (GKFSTE). N-linked (GlcNAc...) asparagine glycosylation occurs at Asn185. Beta stranded transmembrane passes span 235 to 244 (TVTASAGIAF) and 248 to 256 (VNFKVETDY). Asn269 carries an N-linked (GlcNAc...) asparagine glycan. An intrachain disulfide couples Cys350 to Cys369. Asn375 carries N-linked (GlcNAc...) asparagine glycosylation. 5 cysteine pairs are disulfide-bonded: Cys385–Cys394, Cys432–Cys446, Cys436–Cys442, Cys531–Cys569, and Cys554–Cys574. A P2 region spans residues 410 to 653 (PPGYSPVHLL…GDSNGMSGGE (244 aa)). A helical membrane pass occupies residues 654–674 (AAGITLGVTIALGIVITLAIY).

It belongs to the MPEG1 family. In terms of assembly, homooligomer; predominantly forms a homooligomeric arc-shaped pore complex instead of complete rings of 16 subunits. Proteolytically processed in two steps to generate the Macrophage-expressed gene 1 protein, processed form: cleaved by trypsin in proximity of the helical transmembrane domain releases the ectodomain into the lysosomal lumen to orient the pore-forming domain toward the endogenous membranes, and processed by the asparagine endopeptidase (LGMN). Proteolytic processing in antigen-containing vesicles is pH-dependent. Post-translationally, monoubiquitinated in response to bacterial infection; ubiquitination is required for vesicular localization and antibacterial activity and can be blocked by bacterial cell cycle inhibiting factor (cif). As to expression, expressed constitutively in a variety of cell types including macrophages, microglia, neutrophils, T cells, marginal zone B cells, keratinocytes, splenocytes and intestinal epithelial cells.

Its subcellular location is the cytoplasmic vesicle membrane. It is found in the cytoplasmic vesicle. It localises to the phagosome membrane. With respect to regulation, forms arc- and ring-shaped pre-pores on top of the membrane at neutral to slightly acidic pH conditions and converts to pores upon acidification. Undergoes transition from the pre-pore to the pore in a processive clockwise hand-over-hand process. In the pore state, 2 alpha-helical regions refold into transmembrane hairpins (TMH1 and TMH2) in each protomer that form in the ensemble complex giant beta-barrel transmembrane pores. In terms of biological role, pore-forming protein involved in both innate and adaptive immunity. Plays a central role in antigen cross-presentation in dendritic cells by forming a pore in antigen-containing compartments, thereby promoting delivery of antigens for cross-presentation. Also involved in innate immune response following bacterial infection; shows antibacterial activity against a wide spectrum of Gram-positive, Gram-negative and acid-fast bacteria. Reduces the viability of the intracytosolic pathogen L.monocytogenes by inhibiting acidification of the phagocytic vacuole of host cells which restricts bacterial translocation from the vacuole to the cytosol. Required for the antibacterial activity of reactive oxygen species and nitric oxide. Functionally, pore-forming protein that plays a central role in antigen cross-presentation in dendritic cells by mediating delivery of antigens for cross-presentation. Dendritic cells bridge innate and adaptive immunity by capturing exogenous antigens on MHC class-I molecules and presenting them to naive CD8(+) T-cells. Acts by forming a pore in antigen-containing compartments, promoting the release of antigens into the cytosol, enabling generation of MHCI:peptide complexes and T-cell priming. The sequence is that of Macrophage-expressed gene 1 protein from Mus musculus (Mouse).